The following is a 405-amino-acid chain: MPDDASDLADRVQAGDLRLYELDDETDADTAAAARRAVLERETDADTDALGAFAFDADQAADTAVENLTGGAQLPLGVAGPVALSGGAADGEYYLPMATTEGALVASVNRGCSAITAAGGANARVTKTGMTRAPVFRVADVTEGAEVAQWADDNTDALAAAAESTTSHGELTDVTPYVVGDNVYLRFRYDTKDAMGMNMATIATEAASELVEDETPAELVAVSGNLCTDKKPAAINAVEGRGRTVTADVTIPQDVVEERFDTTPAAIEEANTRKNLIGSAKAGSLGFNAHAANVVAAVFLATGQDAAQVVEGANAITTVEARDDALYASVNLASLEVGTVGGGTTLPTQREALDVLGVRGGGDPAGANADALAEIIAVGALAGEINLLAALASRRLSAAHADLGR.

Active-site charge relay system residues include Glu-101 and Asp-305. His-400 acts as the Proton donor in catalysis.

It belongs to the HMG-CoA reductase family. Homodimer.

Its subcellular location is the cytoplasm. The enzyme catalyses (R)-mevalonate + 2 NADP(+) + CoA = (3S)-3-hydroxy-3-methylglutaryl-CoA + 2 NADPH + 2 H(+). Its pathway is metabolic intermediate biosynthesis; (R)-mevalonate biosynthesis; (R)-mevalonate from acetyl-CoA: step 3/3. With respect to regulation, is competitively inhibited by lovastatin (formerly called mevinolin). Lovastatin also blocks the growth of H.salinarum, and this effect is reversed by addition of mevalonate, indicating the critical role that the mevalonate pathway plays in isoprenoid biosynthesis by these archaea. Catalyzes the NADPH-dependent reductive deacylation of (S)-3-hydroxy-3-methylglutaryl-CoA (HMG-CoA) to (R)-mevalonate. Cannot use NADH instead of NADPH. Functions in the mevalonate (MVA) pathway leading to isopentenyl diphosphate (IPP), a key precursor for the biosynthesis of isoprenoid compounds such as archaeal membrane lipids. In Halobacterium salinarum (strain ATCC 29341 / DSM 671 / R1), this protein is 3-hydroxy-3-methylglutaryl-coenzyme A reductase (hmgA).